The primary structure comprises 470 residues: PTS system trehalose-specific EIIBC component (470 aa).

A PTS EIIB type-1 domain is found at 1–88 (MGELNKSARQ…VKETGIGEST (88 aa)). The active-site Phosphocysteine intermediate; for EIIB activity is the Cys27. Cys27 carries the post-translational modification Phosphocysteine; by EIIA. The 363-residue stretch at 108–470 (KTLADIFIPI…TYAYARFKHK (363 aa)) folds into the PTS EIIC type-1 domain. Transmembrane regions (helical) follow at residues 110-130 (LADI…LMGI), 160-180 (INLI…WSAV), 183-203 (FGGN…PDLL), 234-254 (GQVL…VFLT), 263-283 (LLVV…IIIG), 301-321 (FGSF…ALVI), 326-346 (HTFL…TFLW), 347-367 (PMLA…MFIV), 403-423 (FIIA…QGVL), and 443-463 (WGAF…GTYA).

Its subcellular location is the cell membrane. The enzyme catalyses alpha,alpha-trehalose(out) + N(pros)-phospho-L-histidyl-[protein] = alpha,alpha-trehalose 6-phosphate(in) + L-histidyl-[protein]. The phosphoenolpyruvate-dependent sugar phosphotransferase system (sugar PTS), a major carbohydrate active transport system, catalyzes the phosphorylation of incoming sugar substrates concomitantly with their translocation across the cell membrane. This system is involved in trehalose transport. This is PTS system trehalose-specific EIIBC component (treP) from Bacillus subtilis (strain 168).